The primary structure comprises 417 residues: Argininosuccinate synthase (417 aa).

9 to 17 (AYSGGLDTS) is a binding site for ATP. Tyr-87 contacts L-citrulline. Gly-117 serves as a coordination point for ATP. Residues Thr-119, Asn-123, and Asp-124 each coordinate L-aspartate. L-citrulline is bound at residue Asn-123. L-citrulline is bound by residues Arg-127, Ser-175, Ser-184, Glu-260, and Tyr-272.

It belongs to the argininosuccinate synthase family. Type 1 subfamily. As to quaternary structure, homotetramer.

It is found in the cytoplasm. It catalyses the reaction L-citrulline + L-aspartate + ATP = 2-(N(omega)-L-arginino)succinate + AMP + diphosphate + H(+). It participates in amino-acid biosynthesis; L-arginine biosynthesis; L-arginine from L-ornithine and carbamoyl phosphate: step 2/3. The protein is Argininosuccinate synthase of Oceanobacillus iheyensis (strain DSM 14371 / CIP 107618 / JCM 11309 / KCTC 3954 / HTE831).